We begin with the raw amino-acid sequence, 500 residues long: Cytochrome P450 2D27 (500 aa).

Cys446 provides a ligand contact to heme.

The protein belongs to the cytochrome P450 family. It depends on heme as a cofactor. As to expression, expressed in liver, but not in kidney, small intestine, and brain.

It is found in the endoplasmic reticulum membrane. The protein resides in the microsome membrane. Has bufuralol 1'-hydroxylase and debrisoquine 4-hydroxylase activities. In Mesocricetus auratus (Golden hamster), this protein is Cytochrome P450 2D27 (CYP2D27).